Consider the following 445-residue polypeptide: Argininosuccinate synthase (445 aa).

Residues 17-25 (AFSGGLDTS) and alanine 43 contribute to the ATP site. Tyrosine 99 provides a ligand contact to L-citrulline. 2 residues coordinate ATP: glycine 129 and threonine 131. Positions 131, 135, and 136 each coordinate L-aspartate. L-citrulline is bound at residue asparagine 135. Aspartate 136 contacts ATP. L-citrulline contacts are provided by arginine 139 and serine 192. Residue aspartate 194 participates in ATP binding. Positions 201, 203, and 280 each coordinate L-citrulline.

It belongs to the argininosuccinate synthase family. Type 2 subfamily. Homotetramer.

It is found in the cytoplasm. It carries out the reaction L-citrulline + L-aspartate + ATP = 2-(N(omega)-L-arginino)succinate + AMP + diphosphate + H(+). Its pathway is amino-acid biosynthesis; L-arginine biosynthesis; L-arginine from L-ornithine and carbamoyl phosphate: step 2/3. The sequence is that of Argininosuccinate synthase from Rhodopseudomonas palustris (strain BisA53).